Reading from the N-terminus, the 182-residue chain is CASP-like protein 2B1 (182 aa).

At 1–12 the chain is on the cytoplasmic side; it reads MKLIDRRMRLTE. The chain crosses the membrane as a helical span at residues 13–31; that stretch reads LLLRCSISVFALLALILVV. The Extracellular portion of the chain corresponds to 32-52; the sequence is TDTEVKLIFTIKKTAKYTDMK. A helical membrane pass occupies residues 53 to 73; that stretch reads AVVFLVVANGIAAVYSLLQSV. Residues 74 to 89 are Cytoplasmic-facing; that stretch reads RCVVGTMKGKVLFSKP. A helical transmembrane segment spans residues 90 to 110; sequence LAWAFFSGDQAMAYLNVAAIA. The Extracellular portion of the chain corresponds to 111-141; sequence ATAESGVIAREGEEDLQWMRVCTMYGKFCNQ. Residues 142–162 form a helical membrane-spanning segment; that stretch reads MAIGVSSALLASIAMVFVSCI. Over 163-182 the chain is Cytoplasmic; it reads SAFSLFRLYGATKDRRTTPW.

It belongs to the Casparian strip membrane proteins (CASP) family. As to quaternary structure, homodimer and heterodimers.

It is found in the cell membrane. This Arabidopsis thaliana (Mouse-ear cress) protein is CASP-like protein 2B1.